The primary structure comprises 204 residues: Holliday junction branch migration complex subunit RuvA (204 aa).

The domain I stretch occupies residues 1–65 (MIGRLRGAVA…SAGLRLYGFG (65 aa)). The tract at residues 66 to 142 (TREDRRAFVL…PITDGPVLMT (77 aa)) is domain II. A flexible linker region spans residues 143-152 (APGAVAAAPA). Positions 152–204 (AKAAPTGDAVAALMGLGVAEVNARRVVEAAAAKLGDEATVQALIKAGLQELGR) are domain III.

The protein belongs to the RuvA family. Homotetramer. Forms an RuvA(8)-RuvB(12)-Holliday junction (HJ) complex. HJ DNA is sandwiched between 2 RuvA tetramers; dsDNA enters through RuvA and exits via RuvB. An RuvB hexamer assembles on each DNA strand where it exits the tetramer. Each RuvB hexamer is contacted by two RuvA subunits (via domain III) on 2 adjacent RuvB subunits; this complex drives branch migration. In the full resolvosome a probable DNA-RuvA(4)-RuvB(12)-RuvC(2) complex forms which resolves the HJ.

The protein localises to the cytoplasm. In terms of biological role, the RuvA-RuvB-RuvC complex processes Holliday junction (HJ) DNA during genetic recombination and DNA repair, while the RuvA-RuvB complex plays an important role in the rescue of blocked DNA replication forks via replication fork reversal (RFR). RuvA specifically binds to HJ cruciform DNA, conferring on it an open structure. The RuvB hexamer acts as an ATP-dependent pump, pulling dsDNA into and through the RuvAB complex. HJ branch migration allows RuvC to scan DNA until it finds its consensus sequence, where it cleaves and resolves the cruciform DNA. The protein is Holliday junction branch migration complex subunit RuvA of Caulobacter sp. (strain K31).